The primary structure comprises 679 residues: Leucine-rich repeat, immunoglobulin-like domain and transmembrane domain-containing protein 3 (679 aa).

Positions 1-19 (MHLFACLCIVLSFLEGVGC) are cleaved as a signal peptide. The Lumenal segment spans residues 20-582 (LCPSQCTCDY…RVEGDDSQWS (563 aa)). LRR repeat units follow at residues 56–79 (PVDTVKLRIEKTVIRRISAEAFYY), 80–103 (LVELQYLWVTYNSVASIDPSSFYN), 104–128 (LKQLHELRLDGNSLAAFPWASLLDM), 129–151 (PLLRTLDLHNNKITSVPNEALRY), and 152–175 (LKNLAYLDLSSNRLTTLPPDFLES). Positions 201–253 (NPWFCDCHISKMIELSKVVDPAIVLLDPLMTCSEPERLTGILFQRAELEHCLK) constitute an LRRCT domain. An Ig-like domain is found at 254–344 (PSVMTSATKI…GMSEAVVTVT (91 aa)). Cys275 and Cys328 are joined by a disulfide. A glycan (N-linked (GlcNAc...) asparagine) is linked at Asn296. The tract at residues 351 to 375 (TPIPPDTSERTGDHPEWDVQPGSGR) is disordered. Residues 357-367 (TSERTGDHPEW) show a composition bias toward basic and acidic residues. The region spanning 486–574 (AIENLRVVSE…QCITFSTERV (89 aa)) is the Fibronectin type-III domain. The helical transmembrane segment at 583-603 (LLLVVTSTACVVILPLICFLL) threads the bilayer. The Cytoplasmic segment spans residues 604–679 (YKVCKLQCKS…SEGSRPEYYC (76 aa)).

In terms of processing, glycosylated. Detected in the outer plexiform layer (OPL) of the retina where it localizes to ON-bipolar cells (at protein level).

The protein resides in the cell projection. It localises to the dendrite. Its subcellular location is the perikaryon. It is found in the endoplasmic reticulum membrane. Plays a role in the synapse formation and synaptic transmission between cone photoreceptor cells and retinal bipolar cells. Required for normal transmission of a light-evoked stimulus from the cone photoreceptor cells to the ON-bipolar cells and ON-ganglion cells in the inner retina. Required in retinal ON-bipolar cells for normal localization of the cation channel TRPM1 at dendrite tips. Seems to play a specific role in synaptic contacts made by ON-bipolar cells with cone photoreceptor pedicles. May also have a role in cone synapse formation. Might facilitate FGFR1 exit from the endoplasmic reticulum to the Golgi. Could be a regulator of the FGFRs. The polypeptide is Leucine-rich repeat, immunoglobulin-like domain and transmembrane domain-containing protein 3 (LRIT3) (Homo sapiens (Human)).